The sequence spans 250 residues: MSKENKTTDFGFTQVPWEEKQKKVAGVFHSVAAKYDLMNDLMSFGIHRIWKKQTIAKSGVRKGDNVLDLAGGTGDLAYKFCQMVGQQGKVILSDINSSMLEVGKEKLTNKGCVGNIEYVQANAECLPFPDNYFDCITISFGLRNVTDKDKALASMCRVLKPGGRLLVLEFSKPIIPLLSKVYDEYSFKALPFLGKIITQDAESYKYLAESICKHPDQQTLKQMMYDAGFDNVEYQNMTGGIVALHIGYKY.

S-adenosyl-L-methionine contacts are provided by residues T73, D94, 122–123 (NA), and S139.

Belongs to the class I-like SAM-binding methyltransferase superfamily. MenG/UbiE family.

It catalyses the reaction a 2-demethylmenaquinol + S-adenosyl-L-methionine = a menaquinol + S-adenosyl-L-homocysteine + H(+). The catalysed reaction is a 2-methoxy-6-(all-trans-polyprenyl)benzene-1,4-diol + S-adenosyl-L-methionine = a 5-methoxy-2-methyl-3-(all-trans-polyprenyl)benzene-1,4-diol + S-adenosyl-L-homocysteine + H(+). It participates in quinol/quinone metabolism; menaquinone biosynthesis; menaquinol from 1,4-dihydroxy-2-naphthoate: step 2/2. The protein operates within cofactor biosynthesis; ubiquinone biosynthesis. Its function is as follows. Methyltransferase required for the conversion of demethylmenaquinol (DMKH2) to menaquinol (MKH2) and the conversion of 2-polyprenyl-6-methoxy-1,4-benzoquinol (DDMQH2) to 2-polyprenyl-3-methyl-6-methoxy-1,4-benzoquinol (DMQH2). This Francisella tularensis subsp. holarctica (strain FTNF002-00 / FTA) protein is Ubiquinone/menaquinone biosynthesis C-methyltransferase UbiE.